A 211-amino-acid polypeptide reads, in one-letter code: N-(5'-phosphoribosyl)anthranilate isomerase (211 aa).

It belongs to the TrpF family.

It catalyses the reaction N-(5-phospho-beta-D-ribosyl)anthranilate = 1-(2-carboxyphenylamino)-1-deoxy-D-ribulose 5-phosphate. It functions in the pathway amino-acid biosynthesis; L-tryptophan biosynthesis; L-tryptophan from chorismate: step 3/5. This chain is N-(5'-phosphoribosyl)anthranilate isomerase, found in Desulfovibrio desulfuricans (strain ATCC 27774 / DSM 6949 / MB).